A 158-amino-acid polypeptide reads, in one-letter code: Ethylene-responsive transcription factor ERF120 (158 aa).

The segment at residues 86-147 (KHKGVRKKPS…SARRGTKNGE (62 aa)) is a DNA-binding region (AP2/ERF). The tract at residues 134 to 158 (VGRRSARRGTKNGEEASTKKTTEKN) is disordered. Residues 144–158 (KNGEEASTKKTTEKN) are compositionally biased toward basic and acidic residues.

The protein belongs to the AP2/ERF transcription factor family. ERF subfamily.

The protein localises to the nucleus. In terms of biological role, probably acts as a transcriptional activator. Binds to the GCC-box pathogenesis-related promoter element. May be involved in the regulation of gene expression by stress factors and by components of stress signal transduction pathways. The protein is Ethylene-responsive transcription factor ERF120 (ERF120) of Arabidopsis thaliana (Mouse-ear cress).